The primary structure comprises 205 residues: Adenylyl-sulfate kinase (205 aa).

31–38 (GLSGAGKS) lines the ATP pocket. Catalysis depends on Ser-105, which acts as the Phosphoserine intermediate.

It belongs to the APS kinase family.

It catalyses the reaction adenosine 5'-phosphosulfate + ATP = 3'-phosphoadenylyl sulfate + ADP + H(+). The protein operates within sulfur metabolism; hydrogen sulfide biosynthesis; sulfite from sulfate: step 2/3. Its function is as follows. Catalyzes the synthesis of activated sulfate. In Shewanella baltica (strain OS155 / ATCC BAA-1091), this protein is Adenylyl-sulfate kinase.